The chain runs to 876 residues: Translation initiation factor IF-2 (876 aa).

One can recognise a tr-type G domain in the interval 378 to 547 (TRPPIITIMG…LTQSEMLELK (170 aa)). Residues 387-394 (GHVDHGKT) form a G1 region. 387–394 (GHVDHGKT) contacts GTP. The G2 stretch occupies residues 412-416 (RITQH). Positions 433–436 (DTPG) are G3. GTP-binding positions include 433–437 (DTPGH) and 487–490 (NKID). The segment at 487 to 490 (NKID) is G4. A G5 region spans residues 523 to 525 (SAK).

It belongs to the TRAFAC class translation factor GTPase superfamily. Classic translation factor GTPase family. IF-2 subfamily.

It is found in the cytoplasm. Its function is as follows. One of the essential components for the initiation of protein synthesis. Protects formylmethionyl-tRNA from spontaneous hydrolysis and promotes its binding to the 30S ribosomal subunits. Also involved in the hydrolysis of GTP during the formation of the 70S ribosomal complex. This chain is Translation initiation factor IF-2, found in Buchnera aphidicola subsp. Baizongia pistaciae (strain Bp).